The primary structure comprises 217 residues: MARKGILGTKLGMTQVFDENNRVVPVTVVKAGPNVVTRIRTLERDGYSAVQLAYGEISPRKVNKPVTGQYNSAGVNPRRYLAELRLDHPDAAAEYEVGQELTAEIFADATYVDVTGTSKGKGFSGTMKRHGFRGQGASHGAQAVHRRPGSIGGCATPARVFKGTRMAGRMGNDRVTVQNLLVHKVDTENGVLLIKGAVPGRTGGLVMVRSAIKRGEK.

This sequence belongs to the universal ribosomal protein uL3 family. Part of the 50S ribosomal subunit. Forms a cluster with proteins L14 and L19.

Functionally, one of the primary rRNA binding proteins, it binds directly near the 3'-end of the 23S rRNA, where it nucleates assembly of the 50S subunit. The sequence is that of Large ribosomal subunit protein uL3 from Mycobacterium leprae (strain TN).